The following is a 407-amino-acid chain: Putative membrane protein 047R (407 aa).

Positions 265 to 337 (INCVFKPDPP…PPKPTPPPPI (73 aa)) are disordered. A compositionally biased stretch (pro residues) spans 271-337 (PDPPPQPKPQ…PPKPTPPPPI (67 aa)). Helical transmembrane passes span 355 to 372 (NWIMLTFVGLVLALVIYP) and 385 to 403 (NAAIAVLVGLNAFGLQSYV).

It belongs to the IIV-6 337L family.

It localises to the virion membrane. In Aedes vexans (Inland floodwater mosquito), this protein is Putative membrane protein 047R.